We begin with the raw amino-acid sequence, 157 residues long: Crossover junction endodeoxyribonuclease RuvC (157 aa).

Catalysis depends on residues D7, E66, and D139. Residues D7, E66, and D139 each coordinate Mg(2+).

This sequence belongs to the RuvC family. In terms of assembly, homodimer which binds Holliday junction (HJ) DNA. The HJ becomes 2-fold symmetrical on binding to RuvC with unstacked arms; it has a different conformation from HJ DNA in complex with RuvA. In the full resolvosome a probable DNA-RuvA(4)-RuvB(12)-RuvC(2) complex forms which resolves the HJ. The cofactor is Mg(2+).

Its subcellular location is the cytoplasm. It carries out the reaction Endonucleolytic cleavage at a junction such as a reciprocal single-stranded crossover between two homologous DNA duplexes (Holliday junction).. Its function is as follows. The RuvA-RuvB-RuvC complex processes Holliday junction (HJ) DNA during genetic recombination and DNA repair. Endonuclease that resolves HJ intermediates. Cleaves cruciform DNA by making single-stranded nicks across the HJ at symmetrical positions within the homologous arms, yielding a 5'-phosphate and a 3'-hydroxyl group; requires a central core of homology in the junction. The consensus cleavage sequence is 5'-(A/T)TT(C/G)-3'. Cleavage occurs on the 3'-side of the TT dinucleotide at the point of strand exchange. HJ branch migration catalyzed by RuvA-RuvB allows RuvC to scan DNA until it finds its consensus sequence, where it cleaves and resolves the cruciform DNA. The protein is Crossover junction endodeoxyribonuclease RuvC of Campylobacter curvus (strain 525.92).